Here is a 64-residue protein sequence, read N- to C-terminus: Disintegrin lebein-1-beta (64 aa).

Residues 1–64 form the Disintegrin domain; sequence NSGNPCCDPV…SDCPRNPYKD (64 aa). Disulfide bonds link cysteine 6/cysteine 29, cysteine 20/cysteine 26, cysteine 25/cysteine 50, and cysteine 38/cysteine 57. Residues 42–44 carry the Cell attachment site motif; it reads RGD.

This sequence belongs to the disintegrin family. Dimeric disintegrin subfamily. As to quaternary structure, heterodimer with subunit alpha; disulfide-linked. In terms of tissue distribution, expressed by the venom gland.

It localises to the secreted. Strongly inhibits ADP-induced platelet aggregation on human platelet-rich plasma. Also avidly binds to the laminin-binding beta-1 integrins (alpha-3/beta-1, alpha-6/beta-1, and alpha-7/beta-1) in an RGD-independent manner. This Macrovipera lebetinus (Levantine viper) protein is Disintegrin lebein-1-beta.